A 513-amino-acid polypeptide reads, in one-letter code: MDEFHRCGKEDSFWQQCFLYPLFFQEDLYAISHDHYLDVSSSSRPMEHLSSNDQLSFLTVKRLIGQIRQQNHSIVLFVNCDPNPLADRKKSFYSESVLEALTLVLEVPFSIWSKSSVEGMNECKSFRSIHSIFPFLEDKFPHSNSILDARIPYSIHPEILVRTFRRWIRDAPSLHPLRSVLYDYRNSPENLQRSIIVVPRVNTRFFLFLLNYYVCECESILFSRLKRSSHSRSLSHGSFPQRTHFHRKIKHIIIFSRRNSLKSIWSLKDPKIHYVRYGERPIIAIKGDDLLVKKCRYYLLIFRQFYFHLWSEPYRVCSHQLSKNCSSSPGYFLRVRMNPLLVPTKTLDDFFIPILITNEMDPIVPIVPIIGLLATEKFCDISGRPISKLSWTSLTDDDILDRFDQIWRNLFHYYSGSFDRDGLYRIKYILLLSCAKTLACKHKSTIRVVRKELGPELFKKSFSKEREFDSLPFSSKAASQRERIWHSDIPQINPLANSWQKIQDLKIENLFDQ.

The protein belongs to the intron maturase 2 family. MatK subfamily.

It is found in the plastid. It localises to the chloroplast. Usually encoded in the trnK tRNA gene intron. Probably assists in splicing its own and other chloroplast group II introns. The chain is Maturase K from Pinus resinosa (Red pine).